Here is a 441-residue protein sequence, read N- to C-terminus: Trigger factor (441 aa).

The PPIase FKBP-type domain maps to 161–246; sequence GDMVTVDFQG…VKDVKERILA (86 aa).

This sequence belongs to the FKBP-type PPIase family. Tig subfamily.

It is found in the cytoplasm. The enzyme catalyses [protein]-peptidylproline (omega=180) = [protein]-peptidylproline (omega=0). Involved in protein export. Acts as a chaperone by maintaining the newly synthesized protein in an open conformation. Functions as a peptidyl-prolyl cis-trans isomerase. The protein is Trigger factor of Desulfotalea psychrophila (strain LSv54 / DSM 12343).